A 57-amino-acid polypeptide reads, in one-letter code: UPF0391 membrane protein bsl6560 (57 aa).

A run of 2 helical transmembrane segments spans residues 4-24 and 30-50; these read WVVT…GGIA and IAKI…VVGL.

It belongs to the UPF0391 family.

The protein localises to the cell membrane. In Bradyrhizobium diazoefficiens (strain JCM 10833 / BCRC 13528 / IAM 13628 / NBRC 14792 / USDA 110), this protein is UPF0391 membrane protein bsl6560.